An 84-amino-acid polypeptide reads, in one-letter code: Small ribosomal subunit protein uS17 (84 aa).

It belongs to the universal ribosomal protein uS17 family. In terms of assembly, part of the 30S ribosomal subunit.

One of the primary rRNA binding proteins, it binds specifically to the 5'-end of 16S ribosomal RNA. This Histophilus somni (strain 129Pt) (Haemophilus somnus) protein is Small ribosomal subunit protein uS17.